The following is a 407-amino-acid chain: Arylacetamide deacetylase-like 3 (407 aa).

The short motif at 119-121 (HGG) is the Involved in the stabilization of the negatively charged intermediate by the formation of the oxyanion hole element. Catalysis depends on residues Ser193, Asp347, and His377.

It belongs to the 'GDXG' lipolytic enzyme family.

The polypeptide is Arylacetamide deacetylase-like 3 (AADACL3) (Homo sapiens (Human)).